Here is a 308-residue protein sequence, read N- to C-terminus: 2-dehydro-3-deoxy-phosphogluconate/2-dehydro-3-deoxy-6-phosphogalactonate aldolase (308 aa).

Residues 57–58, 144–146, and 169–171 contribute to the substrate site; these read TT, YNY, and KDT. Lys-169 functions as the Schiff-base intermediate with substrate in the catalytic mechanism.

The protein belongs to the DapA family. KDPG aldolase subfamily. Homotetramer; dimer of dimers.

The catalysed reaction is 2-dehydro-3-deoxy-6-phospho-D-gluconate = D-glyceraldehyde 3-phosphate + pyruvate. The enzyme catalyses 2-dehydro-3-deoxy-6-phospho-D-galactonate = D-glyceraldehyde 3-phosphate + pyruvate. The protein operates within carbohydrate acid metabolism; 2-dehydro-3-deoxy-D-gluconate degradation; D-glyceraldehyde 3-phosphate and pyruvate from 2-dehydro-3-deoxy-D-gluconate: step 2/2. Involved in the degradation of glucose and galactose via the Entner-Doudoroff pathway. Catalyzes the reversible cleavage of 2-keto-3-deoxy-6-phosphogluconate (KDPG) and 2-keto-3-deoxygluconate (KDG) forming pyruvate and glyceraldehyde 3-phosphate or glyceraldehyde, respectively. It is also able to catalyze the reversible cleavage of 2-keto-3-deoxy-6-phosphogalactonate (KDPGal) and 2-keto-3-deoxygalactonate (KDGal). The sequence is that of 2-dehydro-3-deoxy-phosphogluconate/2-dehydro-3-deoxy-6-phosphogalactonate aldolase (eda) from Saccharolobus solfataricus (strain ATCC 35092 / DSM 1617 / JCM 11322 / P2) (Sulfolobus solfataricus).